Here is a 1650-residue protein sequence, read N- to C-terminus: Phosphatidylinositol 3,4,5-trisphosphate-dependent Rac exchanger 1 protein (1650 aa).

Residues 1 to 19 show a composition bias toward gly residues; the sequence is MEAPGSGGGDGGGDPGGDG. Residues 1 to 33 are disordered; it reads MEAPGSGGGDGGGDPGGDGAHPDARGPVSGPCA. Residues 44–235 enclose the DH domain; sequence LRLCVLNEIL…KTVCSNINET (192 aa). The region spanning 266–387 is the PH domain; that stretch reads ELLLQGNLLK…WLDALIRERE (122 aa). S314 bears the Phosphoserine mark. DEP domains lie at 416-491 and 518-592; these read MSKK…RFRY and SLYA…RFHA. A PDZ domain is found at 620 to 698; it reads RLLIPPQEDD…SRRPLRLLVA (79 aa). The interval 793–813 is disordered; the sequence is ARASQGAPDEDPQEDDQPDSA. Residues 800–810 show a composition bias toward acidic residues; the sequence is PDEDPQEDDQP. S991 carries the phosphoserine modification. Disordered stretches follow at residues 1022–1047 and 1099–1129; these read SPAVDEDSQGQGLNDSSYGSASGAPS and PTSAAPAPCDPSLVEETSSSPPVSEESEVDR. The segment covering 1030 to 1047 has biased composition (polar residues); sequence QGQGLNDSSYGSASGAPS. Low complexity predominate over residues 1109-1122; that stretch reads PSLVEETSSSPPVS. Phosphoserine occurs at positions 1186 and 1191.

Interacts preferentially with RAC2. Interacts with RAC1. Interacts with AUTS2.

The protein resides in the cytoplasm. It is found in the cytosol. It localises to the cell membrane. In terms of biological role, functions as a RAC guanine nucleotide exchange factor (GEF), which activates the Rac proteins by exchanging bound GDP for free GTP. Its activity is synergistically activated by phosphatidylinositol 3,4,5-trisphosphate and the beta gamma subunits of heterotrimeric G protein. May function downstream of heterotrimeric G proteins in neutrophils. This Mus musculus (Mouse) protein is Phosphatidylinositol 3,4,5-trisphosphate-dependent Rac exchanger 1 protein (Prex1).